A 501-amino-acid chain; its full sequence is NAD(P)H-quinone oxidoreductase chain 4, chloroplastic (501 aa).

15 helical membrane passes run 4 to 24, 37 to 57, 87 to 107, 113 to 130, 134 to 154, 167 to 187, 207 to 227, 242 to 262, 274 to 294, 310 to 330, 331 to 351, 364 to 384, 385 to 405, 416 to 436, and 462 to 482; these read FPWLTIIVLLPISAGLLIPLL, LGICLVEFLLITYIFCNYFHF, IGLILLTGFITTLATLAAWPI, LSYFLMLAMYSGQVGLFA, ILLFFFMWELELIPVYLLLSM, FILYTAGSSVFLLMGALTMGL, IGLEIILYLGFFIAYAVKLPM, HYSTCMLLAGILLKMGGYGLI, SIFAPWLVVIGAIQIVYSALT, VSHMGFVLIGIGSTTDIGVNG, AILQMISHGLIGAALFFSAGV, MGGIATSIPKIFTMFSSFSMA, SLALPGLSGFVAELMIFLGIV, VVIIIVAATGIILTPIYLLSM, and IFIFICLFFPIIGIGFYPKLV.

This sequence belongs to the complex I subunit 4 family.

Its subcellular location is the plastid. The protein resides in the chloroplast thylakoid membrane. It carries out the reaction a plastoquinone + NADH + (n+1) H(+)(in) = a plastoquinol + NAD(+) + n H(+)(out). It catalyses the reaction a plastoquinone + NADPH + (n+1) H(+)(in) = a plastoquinol + NADP(+) + n H(+)(out). The polypeptide is NAD(P)H-quinone oxidoreductase chain 4, chloroplastic (ndhD) (Anthoceros angustus (Hornwort)).